Consider the following 271-residue polypeptide: Sedoheptulose 1,7-bisphosphatase (271 aa).

Residue R12 coordinates substrate. H13 functions as the Tele-phosphohistidine intermediate in the catalytic mechanism. Substrate-binding positions include Y24 to T25, R69, E99 to Y102, R181, and H244. E99 functions as the Proton donor/acceptor in the catalytic mechanism.

This sequence belongs to the phosphoglycerate mutase family. SHB17 subfamily. Homodimer.

The protein resides in the cytoplasm. Its subcellular location is the nucleus. It carries out the reaction D-sedoheptulose 1,7-bisphosphate + H2O = D-sedoheptulose 7-phosphate + phosphate. Functionally, sedoheptulose 1,7-bisphosphatase involved in riboneogenesis. Dephosphorylates sedoheptulose 1,7-bisphosphate (SBP), which is converted via the non-oxidative pentose phosphate pathway to ribose-5-phosphate. Has a fructose 1,6-bisphosphatase activity in vitro, but this is probably not biologically relevant, since deletion does not affect fructose 1,6-biphosphate (FBP) levels. In Saccharomyces cerevisiae (strain ATCC 204508 / S288c) (Baker's yeast), this protein is Sedoheptulose 1,7-bisphosphatase (SHB17).